A 212-amino-acid chain; its full sequence is Dihydrophenazinedicarboxylate synthase (212 aa).

Ser-8 contributes to the substrate binding site. FMN contacts are provided by residues 63 to 66 and 78 to 79; these read RVIA and CT. His-80 serves as a coordination point for substrate. Residues 84–85 and Gln-107 contribute to the FMN site; that span reads RK. Arg-129 and Ser-137 together coordinate substrate. FMN is bound by residues 142–143 and Arg-195; that span reads QS.

Belongs to the pyridoxamine 5'-phosphate oxidase family. The cofactor is FMN.

It carries out the reaction (1R,6R)-1,4,5,5a,6,9-hexahydrophenazine-1,6-dicarboxylate + O2 = (1R,10aS)-1,4,10,10a-tetrahydrophenazine-1,6-dicarboxylate + H2O2. It catalyses the reaction (1R,10aS)-1,4,10,10a-tetrahydrophenazine-1,6-dicarboxylate + O2 = (5aS)-5,5a-dihydrophenazine-1,6-dicarboxylate + H2O2. The catalysed reaction is (1R,10aS)-1,4,10,10a-tetrahydrophenazine-1-carboxylate + O2 = (10aS)-10,10a-dihydrophenazine-1-carboxylate + H2O2. The enzyme catalyses (1R)-1,4,5,10-tetrahydrophenazine-1-carboxylate + O2 = (10aS)-10,10a-dihydrophenazine-1-carboxylate + H2O2. It participates in antibiotic biosynthesis; phenazine biosynthesis. Functionally, involved in the biosynthesis of the antibiotic phenazine, a nitrogen-containing heterocyclic molecule having important roles in virulence, competition and biological control. Catalyzes several oxidations in the terminal steps of core phenazine biosynthesis. It oxidizes both hexahydrophenazine-1,6-dicarboxylic acid (HHPDC) and tetrahydrophenazine-1-carboxylic acid (THPCA) and thereby contributes to the generation of both phenazine-1,6-dicarboxylic acid (PDC) and phenazine-1-carboxylic acid (PCA). It synthesizes phenazines in their reduced form, which are the likely end products in vivo. The protein is Dihydrophenazinedicarboxylate synthase of Burkholderia lata (strain ATCC 17760 / DSM 23089 / LMG 22485 / NCIMB 9086 / R18194 / 383).